A 766-amino-acid chain; its full sequence is MALAHTLGFPRIGRDRELKKAQEAFWKGELDEAGLRAVGRQLRAAHWQVQKDAGIQLLPVGDFAWYDQVLTHSLTFGVIPERFRAHGEAGPTLHTLFGMARGVSDDSCCGGAHAQEMTKWFDTNYHYLVPEFSADQQFQLSWEQLFEEVDEARALGHQVKPVLIGPLTYLWLGKAKGAEFDRLDLLDRLLPLYGQIFRRLAGQGVEWVQIDEPILVLDLPQAWKNAFERAYNLLQSEPLKKLVATYFGGLEDNLGLAANLPVDGLHIDLVRAPEQYPSILDRLPAYKVVSLGLVNGRNVWRCDLEKALEVVRHARERLGERLWVAPSCSLLHSPVDLEREDGLDAELKSWLAFAVQKCREVAVLARAATEPEAAEVLAALEESRAVQASRASSPRIHKPAVQARLAAIKASDAQRRSPFAERIARQRAGLDLPAFPTTTIGSFPQTSSIRLARQSFKQGKLSEAEYIEAMHSEIRHAVQIQEQLGLDVLVHGEAERNDMVEYFAEQLDGYVFTRFGWVQSYGSRCVKPAVIYGDLSRPRAMTVEWIRYAQSLTDKVMKGMLTGPVTMLMWSFPREDVSREVQARQLALAIRDEVVDLEAAGIRIVQIDEAAFREGLPLRRNAWPHYLEWATEAFRLCASGVRDETQIHTHMCYSEFNDVIESIAAMDADVITIETSRSDMELLEAFEQFDYPNEIGPGVYDIHSPRVPSREEIVALLRKAARRIPAERLWVNPDCGLKTRAWPETEAALVNMVAAARELRGDLARG.

Residues 16 to 19 (RELK) and K119 contribute to the 5-methyltetrahydropteroyltri-L-glutamate site. L-homocysteine-binding positions include 440-442 (IGS) and E493. L-methionine-binding positions include 440 to 442 (IGS) and E493. 5-methyltetrahydropteroyltri-L-glutamate-binding positions include 524–525 (RC) and W570. D608 provides a ligand contact to L-homocysteine. Position 608 (D608) interacts with L-methionine. Position 614 (E614) interacts with 5-methyltetrahydropteroyltri-L-glutamate. The Zn(2+) site is built by H650, C652, and E674. The active-site Proton donor is the H703. C735 is a binding site for Zn(2+).

It belongs to the vitamin-B12 independent methionine synthase family. The cofactor is Zn(2+).

The enzyme catalyses 5-methyltetrahydropteroyltri-L-glutamate + L-homocysteine = tetrahydropteroyltri-L-glutamate + L-methionine. Its pathway is amino-acid biosynthesis; L-methionine biosynthesis via de novo pathway; L-methionine from L-homocysteine (MetE route): step 1/1. Catalyzes the transfer of a methyl group from 5-methyltetrahydrofolate to homocysteine resulting in methionine formation. This is 5-methyltetrahydropteroyltriglutamate--homocysteine methyltransferase from Pseudomonas aeruginosa (strain ATCC 15692 / DSM 22644 / CIP 104116 / JCM 14847 / LMG 12228 / 1C / PRS 101 / PAO1).